The chain runs to 342 residues: Endoplasmic reticulum junction formation protein lunapark-1 (342 aa).

The Cytoplasmic segment spans residues 1 to 39 (MGNLFSRNKSPATELERVALSIDDLKKRLQTISSSNTNT). Residues 13–34 (TELERVALSIDDLKKRLQTISS) adopt a coiled-coil conformation. A helical membrane pass occupies residues 40-60 (LYYYYMSIVVILSIAMAHTWL). At 61–68 (RFEDPQKT) the chain is on the lumenal side. Residues 69-89 (YVACALMLGAIGIVLAGRYVI) traverse the membrane as a helical segment. The Cytoplasmic segment spans residues 90 to 342 (NGFFSWRTNR…ESKTMETEFH (253 aa)). Residues 102–136 (QKLENAISQKTTLLDLVKETLKFKEAKEILDRYEK) adopt a coiled-coil conformation. The tract at residues 161-191 (ADSSMFATPKQEQKRVETPTAQGPNSAMNSM) is disordered. Positions 179-191 (PTAQGPNSAMNSM) are enriched in polar residues. The segment at 236 to 261 (CSICHTHNGMSTPAEYPYISFRCFEC) adopts a C4-type; plays a role in ER morphology zinc-finger fold. Positions 278 to 342 (RPPMGPKGIQ…ESKTMETEFH (65 aa)) are disordered. Residues 295-321 (SENTHNMMENQKPSTDLTPSASQNGSE) show a composition bias toward polar residues. Positions 322–342 (KGSDSENEKVPESKTMETEFH) are enriched in basic and acidic residues.

The protein belongs to the lunapark family. Expressed in cell bodies along the ventral cord around the pharynx and the tail both in larvae and adults. Also expressed in muscles and hypodermal cells.

It is found in the endoplasmic reticulum membrane. Functionally, plays a role in tubular endoplasmic reticulum network formation and maintenance. May be involved in central nervous system development. Has a presynaptic role in neurotransmission. Likely to operate in synaptogenesis by regulating vesicular transport or localization. Required for correct localization of rab-3 and snb-1. This chain is Endoplasmic reticulum junction formation protein lunapark-1 (lnp-1), found in Caenorhabditis elegans.